A 180-amino-acid chain; its full sequence is Large ribosomal subunit protein uL5 (180 aa).

Belongs to the universal ribosomal protein uL5 family. As to quaternary structure, part of the 50S ribosomal subunit; part of the 5S rRNA/L5/L18/L25 subcomplex. Contacts the 5S rRNA and the P site tRNA. Forms a bridge to the 30S subunit in the 70S ribosome.

In terms of biological role, this is one of the proteins that bind and probably mediate the attachment of the 5S RNA into the large ribosomal subunit, where it forms part of the central protuberance. In the 70S ribosome it contacts protein S13 of the 30S subunit (bridge B1b), connecting the 2 subunits; this bridge is implicated in subunit movement. Contacts the P site tRNA; the 5S rRNA and some of its associated proteins might help stabilize positioning of ribosome-bound tRNAs. In Xanthomonas axonopodis pv. citri (strain 306), this protein is Large ribosomal subunit protein uL5.